The primary structure comprises 144 residues: MAADKPLRLLLGFDYGTRQIGVAVGQAVTGQARELCVLKAQNGVPDWNRVEALIKEWQPDAIVVGLPLNMDGSPSEMSERAEKFGRRLNGRFNLPVFTHDERLTTYAAKGERLAQGQRDGYRERPVDALAAALLLEGWLAEHPN.

Belongs to the YqgF nuclease family.

It is found in the cytoplasm. Functionally, could be a nuclease involved in processing of the 5'-end of pre-16S rRNA. This Pseudomonas paraeruginosa (strain DSM 24068 / PA7) (Pseudomonas aeruginosa (strain PA7)) protein is Putative pre-16S rRNA nuclease.